Consider the following 901-residue polypeptide: ABC transporter A family member 8 (901 aa).

7 consecutive transmembrane segments (helical) span residues 34–54, 315–335, 369–389, 402–422, 427–447, 460–477, and 508–528; these read LITI…LFDT, IASL…FPVI, FLLI…LIGL, VFFF…SAMF, TATV…IFLF, WIIA…RGLY, and CIML…DQII. Residues 586–823 enclose the ABC transporter domain; sequence VLCNNLKKVY…YGGSYVLTVT (238 aa). An ATP-binding site is contributed by 624 to 631; the sequence is GPNGAGKT.

This sequence belongs to the ABC transporter superfamily. ABCA family. CPR flippase (TC 3.A.1.211) subfamily.

Its subcellular location is the membrane. This is ABC transporter A family member 8 (ABCA8) from Arabidopsis thaliana (Mouse-ear cress).